Consider the following 210-residue polypeptide: Transcriptional regulator DauR (210 aa).

The protein belongs to the DauR family.

In terms of biological role, dauR represses the dauBAR operon. The polypeptide is Transcriptional regulator DauR (Pseudomonas aeruginosa (strain ATCC 15692 / DSM 22644 / CIP 104116 / JCM 14847 / LMG 12228 / 1C / PRS 101 / PAO1)).